The chain runs to 162 residues: ATP synthase subunit b 1 (162 aa).

A helical membrane pass occupies residues 1-21; the sequence is MLLTAEFWVAVAFVAFLVIVW.

It belongs to the ATPase B chain family. F-type ATPases have 2 components, F(1) - the catalytic core - and F(0) - the membrane proton channel. F(1) has five subunits: alpha(3), beta(3), gamma(1), delta(1), epsilon(1). F(0) has three main subunits: a(1), b(2) and c(10-14). The alpha and beta chains form an alternating ring which encloses part of the gamma chain. F(1) is attached to F(0) by a central stalk formed by the gamma and epsilon chains, while a peripheral stalk is formed by the delta and b chains.

The protein resides in the cell inner membrane. In terms of biological role, f(1)F(0) ATP synthase produces ATP from ADP in the presence of a proton or sodium gradient. F-type ATPases consist of two structural domains, F(1) containing the extramembraneous catalytic core and F(0) containing the membrane proton channel, linked together by a central stalk and a peripheral stalk. During catalysis, ATP synthesis in the catalytic domain of F(1) is coupled via a rotary mechanism of the central stalk subunits to proton translocation. Its function is as follows. Component of the F(0) channel, it forms part of the peripheral stalk, linking F(1) to F(0). The protein is ATP synthase subunit b 1 of Methylorubrum extorquens (strain PA1) (Methylobacterium extorquens).